The following is a 356-amino-acid chain: MKKSDFHYDLPDELIAQAPLAERAASRLLVVPPSPQALADRQVRDLPELLQPGDLLIFNDTRVIPARLFGQKASGGRVEILIERLLGERQARVQIGASKSPKAGSLIALDAGGQAEVLGRDGEFYLLRFEIPTPLEHWLLEAGRLPLPPYIRREPGVEDRERYQTVFAREVGAVAAPTAGLHFDEPLLARLRERGVEFGHVTLHVGAGTFQPVRVDKLDQHVMHKEWLNVGAALVEQVRRTRARGGRVIAVGTTVVRSLESAWRKTEAAPEGELQPFAGETQIFILPGYRIRSVDAMVTNFHLPESTLMMMVSAFAGRERIFAAYHHAIAQRYRFFSYGDAMLLWGRESGLGNGES.

This sequence belongs to the QueA family. Monomer.

It localises to the cytoplasm. It catalyses the reaction 7-aminomethyl-7-carbaguanosine(34) in tRNA + S-adenosyl-L-methionine = epoxyqueuosine(34) in tRNA + adenine + L-methionine + 2 H(+). It participates in tRNA modification; tRNA-queuosine biosynthesis. Transfers and isomerizes the ribose moiety from AdoMet to the 7-aminomethyl group of 7-deazaguanine (preQ1-tRNA) to give epoxyqueuosine (oQ-tRNA). This is S-adenosylmethionine:tRNA ribosyltransferase-isomerase from Xanthomonas axonopodis pv. citri (strain 306).